A 128-amino-acid polypeptide reads, in one-letter code: Small ribosomal subunit protein uS11 (128 aa).

It belongs to the universal ribosomal protein uS11 family. Part of the 30S ribosomal subunit. Interacts with proteins S7 and S18. Binds to IF-3.

In terms of biological role, located on the platform of the 30S subunit, it bridges several disparate RNA helices of the 16S rRNA. Forms part of the Shine-Dalgarno cleft in the 70S ribosome. The sequence is that of Small ribosomal subunit protein uS11 from Synechococcus sp. (strain JA-3-3Ab) (Cyanobacteria bacterium Yellowstone A-Prime).